The chain runs to 123 residues: Small ribosomal subunit protein uS12 (123 aa).

D89 bears the 3-methylthioaspartic acid mark.

Belongs to the universal ribosomal protein uS12 family. In terms of assembly, part of the 30S ribosomal subunit. Contacts proteins S8 and S17. May interact with IF1 in the 30S initiation complex.

In terms of biological role, with S4 and S5 plays an important role in translational accuracy. Its function is as follows. Interacts with and stabilizes bases of the 16S rRNA that are involved in tRNA selection in the A site and with the mRNA backbone. Located at the interface of the 30S and 50S subunits, it traverses the body of the 30S subunit contacting proteins on the other side and probably holding the rRNA structure together. The combined cluster of proteins S8, S12 and S17 appears to hold together the shoulder and platform of the 30S subunit. The polypeptide is Small ribosomal subunit protein uS12 (Desulfovibrio desulfuricans (strain ATCC 27774 / DSM 6949 / MB)).